The primary structure comprises 75 residues: Brevinin-2ISc (75 aa).

Positions 1–22 (MFTLKKSLLLLFFLGTISLSLC) are cleaved as a signal peptide. Residues 23–40 (EEERDADEDEGEMTEEEV) constitute a propeptide, removed in mature form. A disulfide bridge connects residues C69 and C75.

As to expression, expressed by the skin glands.

It is found in the secreted. Its function is as follows. Has antimicrobial activity against Gram-negative bacterium E.coli ATCC 8739 (MIC=50 ug) and against Gram positive bacteria S.aureus ATCC 6538 (MIC=25 ug). Has no activity against methicillin-resistant S.aureus ATCC 43300, B.subtilis ATCC 6633 and against fungus C.albicans ATCC 90028. In Odorrana ishikawae (Ishikawa's frog), this protein is Brevinin-2ISc.